We begin with the raw amino-acid sequence, 173 residues long: Translation initiation factor IF-3 (173 aa).

It belongs to the IF-3 family. Monomer.

It is found in the cytoplasm. In terms of biological role, IF-3 binds to the 30S ribosomal subunit and shifts the equilibrium between 70S ribosomes and their 50S and 30S subunits in favor of the free subunits, thus enhancing the availability of 30S subunits on which protein synthesis initiation begins. The sequence is that of Translation initiation factor IF-3 from Caulobacter vibrioides (strain ATCC 19089 / CIP 103742 / CB 15) (Caulobacter crescentus).